The following is a 141-amino-acid chain: Hemoglobin subunit alpha-2 (141 aa).

The 141-residue stretch at 1–141 (VLTDAERKEV…VATVLTSKYR (141 aa)) folds into the Globin domain. Histidine 58 serves as a coordination point for O2. Histidine 87 contacts heme b.

Belongs to the globin family. As to quaternary structure, heterotetramer of two alpha chains and two beta chains. Red blood cells.

Its function is as follows. Involved in oxygen transport from the lung to the various peripheral tissues. The protein is Hemoglobin subunit alpha-2 of Tachyglossus aculeatus aculeatus (Southeast Australian short-beaked echidna).